The sequence spans 377 residues: Alanine racemase (377 aa).

The active-site Proton acceptor; specific for D-alanine is the lysine 39. At lysine 39 the chain carries N6-(pyridoxal phosphate)lysine. Substrate is bound at residue arginine 137. Tyrosine 266 serves as the catalytic Proton acceptor; specific for L-alanine. Methionine 314 serves as a coordination point for substrate.

The protein belongs to the alanine racemase family. Requires pyridoxal 5'-phosphate as cofactor.

The catalysed reaction is L-alanine = D-alanine. It functions in the pathway amino-acid biosynthesis; D-alanine biosynthesis; D-alanine from L-alanine: step 1/1. Its function is as follows. Catalyzes the interconversion of L-alanine and D-alanine. May also act on other amino acids. This Symbiobacterium thermophilum (strain DSM 24528 / JCM 14929 / IAM 14863 / T) protein is Alanine racemase (alr).